A 535-amino-acid chain; its full sequence is Keratin, type II cytoskeletal 79 (535 aa).

2 stretches are compositionally biased toward polar residues: residues 1–12 (MRSSVSRQTYST) and 28–38 (QARTSFSSVTV). Positions 1-53 (MRSSVSRQTYSTKGAFSSSSASGGGGSQARTSFSSVTVSRNSGRGGGPRCGPS) are disordered. The head stretch occupies residues 1–141 (MRSSVSRQTY…DPEIQRVRTE (141 aa)). The segment covering 43 to 53 (GRGGGPRCGPS) has biased composition (gly residues). The interval 142–177 (EREQIKTLNNKFASFIDKVRFLEQQNKVLETKWALL) is coil 1A. Positions 142–457 (EREQIKTLNN…KLLESEESRM (316 aa)) constitute an IF rod domain. The linker 1 stretch occupies residues 178-198 (QEQGQKSGVTRNNLEPLFEHF). The interval 199-290 (INNLRGKLDN…HLYEEELSQV (92 aa)) is coil 1B. Positions 291-314 (QTHVSDTSVILSMDNNRNLDLDSI) are linker 12. The coil 2 stretch occupies residues 315–453 (IAEVKAQYEQ…ATYRKLLESE (139 aa)). The interval 454-535 (ESRMSGECPS…TTVKTSSRRY (82 aa)) is tail.

Belongs to the intermediate filament family. In terms of assembly, heterotetramer of two type I and two type II keratins.

The polypeptide is Keratin, type II cytoskeletal 79 (KRT79) (Bos taurus (Bovine)).